Consider the following 83-residue polypeptide: Cell division topological specificity factor (83 aa).

Belongs to the MinE family.

Its function is as follows. Prevents the cell division inhibition by proteins MinC and MinD at internal division sites while permitting inhibition at polar sites. This ensures cell division at the proper site by restricting the formation of a division septum at the midpoint of the long axis of the cell. This Buchnera aphidicola subsp. Acyrthosiphon pisum (strain 5A) protein is Cell division topological specificity factor.